Consider the following 346-residue polypeptide: Phosphoribosylformylglycinamidine cyclo-ligase (346 aa).

The protein belongs to the AIR synthase family.

Its subcellular location is the cytoplasm. The catalysed reaction is 2-formamido-N(1)-(5-O-phospho-beta-D-ribosyl)acetamidine + ATP = 5-amino-1-(5-phospho-beta-D-ribosyl)imidazole + ADP + phosphate + H(+). Its pathway is purine metabolism; IMP biosynthesis via de novo pathway; 5-amino-1-(5-phospho-D-ribosyl)imidazole from N(2)-formyl-N(1)-(5-phospho-D-ribosyl)glycinamide: step 2/2. This chain is Phosphoribosylformylglycinamidine cyclo-ligase, found in Bacillus velezensis (strain DSM 23117 / BGSC 10A6 / LMG 26770 / FZB42) (Bacillus amyloliquefaciens subsp. plantarum).